A 203-amino-acid chain; its full sequence is Dual specificity phosphatase 29 (203 aa).

The Tyrosine-protein phosphatase domain occupies 47–193 (HVNQVWPRIY…LRALDIALQE (147 aa)). 137–144 (HCVMGRSR) is a binding site for substrate. The Phosphocysteine intermediate role is filled by cysteine 138.

It belongs to the protein-tyrosine phosphatase family. Non-receptor class dual specificity subfamily.

The protein resides in the cytoplasm. Its subcellular location is the nucleus. It carries out the reaction O-phospho-L-tyrosyl-[protein] + H2O = L-tyrosyl-[protein] + phosphate. The enzyme catalyses O-phospho-L-seryl-[protein] + H2O = L-seryl-[protein] + phosphate. The catalysed reaction is O-phospho-L-threonyl-[protein] + H2O = L-threonyl-[protein] + phosphate. Dual specificity phosphatase able to dephosphorylate phosphotyrosine, phosphoserine and phosphothreonine residues within the same substrate, with a preference for phosphotyrosine as a substrate. Involved in the modulation of AMPK and MAPK1/2 signaling pathways. This chain is Dual specificity phosphatase 29 (dusp29), found in Oryzias latipes (Japanese rice fish).